Consider the following 633-residue polypeptide: ABC transporter G family member 1 (633 aa).

Positions 23-265 (LTWEDLWVTA…FALSGFPCPT (243 aa)) constitute an ABC transporter domain. Residue 60–67 (GPSGSGKS) participates in ATP binding. The region spanning 340–552 (TQSLVLTRRS…AYEGMFKNEF (213 aa)) is the ABC transmembrane type-2 domain. An N-linked (GlcNAc...) asparagine glycan is attached at Asn352. Transmembrane regions (helical) follow at residues 364–384 (LAVY…VGFS), 394–414 (MLMF…PSFV), 440–460 (LSAM…AYFM), 470–490 (FIYF…LMMI), 498–518 (FLMG…SGGF), and 580–600 (IDLV…LLVV).

It belongs to the ABC transporter superfamily. ABCG family. As to quaternary structure, homodimer. As to expression, restricted to the petals, with the highest expression in the limb and, to a lesser extent, in petal tubes, probably in both epidermal and mesophyll cell layers.

It localises to the cell membrane. Its function is as follows. ABC transporter controlling the release of volatile organic compounds (VOCs), including floral volatile benzenoids and phenylpropanoids (FVBP), in flowers of fragrant cultivars (e.g. cv. Mitchell and cv. V26). This scent, mostly produced in the evening and night by the petals, attracts the pollinators (e.g. the night-active hawkmoth pollinator Manduca sexta). The chain is ABC transporter G family member 1 from Petunia hybrida (Petunia).